The following is a 159-amino-acid chain: Protein Smg homolog (159 aa).

Belongs to the Smg family.

This is Protein Smg homolog from Vibrio vulnificus (strain CMCP6).